Reading from the N-terminus, the 1196-residue chain is DNA-directed RNA polymerase subunit beta (1196 aa).

It belongs to the RNA polymerase beta chain family. In terms of assembly, the RNAP catalytic core consists of 2 alpha, 1 beta, 1 beta' and 1 omega subunit. When a sigma factor is associated with the core the holoenzyme is formed, which can initiate transcription.

The catalysed reaction is RNA(n) + a ribonucleoside 5'-triphosphate = RNA(n+1) + diphosphate. Functionally, DNA-dependent RNA polymerase catalyzes the transcription of DNA into RNA using the four ribonucleoside triphosphates as substrates. This Lactococcus lactis subsp. cremoris (strain SK11) protein is DNA-directed RNA polymerase subunit beta.